Consider the following 273-residue polypeptide: Formamidopyrimidine-DNA glycosylase (273 aa).

Pro2 (schiff-base intermediate with DNA) is an active-site residue. Glu3 (proton donor) is an active-site residue. Lys58 serves as the catalytic Proton donor; for beta-elimination activity. 3 residues coordinate DNA: His92, Arg111, and Lys153. An FPG-type zinc finger spans residues 238–272 (KVYGREGQSCLSCSSTIIKIKHSGRSTFYCKTCQY). Arg262 serves as the catalytic Proton donor; for delta-elimination activity.

It belongs to the FPG family. Monomer. Zn(2+) is required as a cofactor.

It carries out the reaction Hydrolysis of DNA containing ring-opened 7-methylguanine residues, releasing 2,6-diamino-4-hydroxy-5-(N-methyl)formamidopyrimidine.. The catalysed reaction is 2'-deoxyribonucleotide-(2'-deoxyribose 5'-phosphate)-2'-deoxyribonucleotide-DNA = a 3'-end 2'-deoxyribonucleotide-(2,3-dehydro-2,3-deoxyribose 5'-phosphate)-DNA + a 5'-end 5'-phospho-2'-deoxyribonucleoside-DNA + H(+). Involved in base excision repair of DNA damaged by oxidation or by mutagenic agents. Acts as a DNA glycosylase that recognizes and removes damaged bases. Has a preference for oxidized purines, such as 7,8-dihydro-8-oxoguanine (8-oxoG). Has AP (apurinic/apyrimidinic) lyase activity and introduces nicks in the DNA strand. Cleaves the DNA backbone by beta-delta elimination to generate a single-strand break at the site of the removed base with both 3'- and 5'-phosphates. In Rickettsia peacockii (strain Rustic), this protein is Formamidopyrimidine-DNA glycosylase.